A 271-amino-acid chain; its full sequence is NH(3)-dependent NAD(+) synthetase (271 aa).

43 to 50 contacts ATP; the sequence is GISGGQDS. Asp-49 is a binding site for Mg(2+). Arg-136 lines the deamido-NAD(+) pocket. Thr-156 contacts ATP. Position 161 (Glu-161) interacts with Mg(2+). Residues Lys-169 and Asp-176 each coordinate deamido-NAD(+). 2 residues coordinate ATP: Lys-185 and Thr-207. Residue 256-257 participates in deamido-NAD(+) binding; sequence HK.

Belongs to the NAD synthetase family. As to quaternary structure, homodimer.

It carries out the reaction deamido-NAD(+) + NH4(+) + ATP = AMP + diphosphate + NAD(+) + H(+). Its pathway is cofactor biosynthesis; NAD(+) biosynthesis; NAD(+) from deamido-NAD(+) (ammonia route): step 1/1. Functionally, catalyzes the ATP-dependent amidation of deamido-NAD to form NAD. Uses ammonia as a nitrogen source. The polypeptide is NH(3)-dependent NAD(+) synthetase (Tropheryma whipplei (strain TW08/27) (Whipple's bacillus)).